Consider the following 362-residue polypeptide: Caveolae-associated protein 4 (362 aa).

The disordered stretch occupies residues 1 to 24 (MEHNGSASNAGKIHQNRLSSVTED). The stretch at 100 to 120 (IKDVKARVEKQQVRVTKVETK) forms a coiled coil. Phosphoserine is present on residues Ser-152, Ser-171, and Ser-172. Basic and acidic residues-rich tracts occupy residues 230–255 (RERLRQSGERLRQSGERLRQSGERFK), 275–289 (KAKDPKAEGQEVDRG), and 305–320 (HEFHSDEFSETEKEVT). Disordered regions lie at residues 230-289 (RERL…VDRG) and 305-346 (HEFH…KPQV). At Tyr-324 the chain carries Phosphotyrosine. Residue Thr-334 is modified to Phosphothreonine. Residue Ser-353 is modified to Phosphoserine.

Belongs to the CAVIN family. In terms of assembly, component of the CAVIN complex composed of CAVIN1, CAVIN2, CAVIN3 and CAVIN4. Interacts with CAVIN1. Interacts with CAVIN2; this augments the transactivation of NPPA. Interacts with CAV3, ADRA1A, ADRA1B, MAPK1 and MAPK3. In terms of tissue distribution, abundantly expressed in cardiac and skeletal muscle (at protein level). Weaker expression in aorta and lung. In heart, expressed in cardiomyocytes and vascular smooth muscle cells but not in other surrounding cells including vascular endothelial cells.

The protein resides in the cytoplasm. It is found in the myofibril. Its subcellular location is the sarcomere. It localises to the cytosol. The protein localises to the membrane. The protein resides in the caveola. It is found in the cell membrane. Its subcellular location is the sarcolemma. Modulates the morphology of formed caveolae in cardiomyocytes, but is not required for caveolar formation. Facilitates the recruitment of MAPK1/3 to caveolae within cardiomyocytes and regulates alpha-1 adrenergic receptor-induced hypertrophic responses in cardiomyocytes through MAPK1/3 activation. Contributes to proper membrane localization and stabilization of caveolin-3 (CAV3) in cardiomyocytes. Induces RHOA activation and activates NPPA transcription and myofibrillar organization through the Rho/ROCK signaling pathway. The sequence is that of Caveolae-associated protein 4 (Cavin4) from Mus musculus (Mouse).